Consider the following 858-residue polypeptide: DNA mismatch repair protein MutS (858 aa).

609–616 (GPNMSGKS) provides a ligand contact to ATP.

The protein belongs to the DNA mismatch repair MutS family.

Functionally, this protein is involved in the repair of mismatches in DNA. It is possible that it carries out the mismatch recognition step. This protein has a weak ATPase activity. The polypeptide is DNA mismatch repair protein MutS (Enterococcus faecalis (strain ATCC 700802 / V583)).